The following is a 50-amino-acid chain: Parvalbumin (50 aa).

The EF-hand domain occupies Lys-38–Leu-50.

Belongs to the parvalbumin family.

Probably regulates the activity of the caudal neurosecretory system. Binds two calcium ions. The protein is Parvalbumin of Scyliorhinus canicula (Small-spotted catshark).